The sequence spans 310 residues: MRIVFAGTPEFAAEHLKALLDSPYEIVAVYTQPDRPAGRGQKLMPSAVKALAVAHDIPVFQPPTLRNEDAQAELAALKPDLMVVVAYGLILPQVVLDIPRLGCINSHASLLPRWRGAAPIQRAVEAGDAESGVTVMRMEAGLDTGPMLLKVVTPISADDTGGSLHDRLAAMGPAAVVQAIAGLADGSLQGEVQDDALATYAHKLNKDEARIDWSRPAVELERLIRAFNPWPVCHSTLDGESVKVLAAKLSTGEGAPGEILSASKDGLVVACGDQALSLTRLQLPGGKALAFTDLFNSRREKFATGKVLGQ.

109–112 provides a ligand contact to (6S)-5,6,7,8-tetrahydrofolate; the sequence is SLLP.

This sequence belongs to the Fmt family.

It carries out the reaction L-methionyl-tRNA(fMet) + (6R)-10-formyltetrahydrofolate = N-formyl-L-methionyl-tRNA(fMet) + (6S)-5,6,7,8-tetrahydrofolate + H(+). In terms of biological role, attaches a formyl group to the free amino group of methionyl-tRNA(fMet). The formyl group appears to play a dual role in the initiator identity of N-formylmethionyl-tRNA by promoting its recognition by IF2 and preventing the misappropriation of this tRNA by the elongation apparatus. The chain is Methionyl-tRNA formyltransferase from Pseudomonas putida (strain W619).